Consider the following 586-residue polypeptide: Lamin-B1 (586 aa).

The interval 1 to 31 (MATATPVPPRMGSRAGGPTTPLSPTRLSRLQ) is disordered. A2 bears the N-acetylalanine mark. The segment at 2–34 (ATATPVPPRMGSRAGGPTTPLSPTRLSRLQEKE) is head. Residues T3 and T5 each carry the phosphothreonine modification. R14 bears the Omega-N-methylarginine mark. The residue at position 20 (T20) is a Phosphothreonine. Phosphoserine is present on S23. Position 25 is a phosphothreonine (T25). S28 carries the post-translational modification Phosphoserine. One can recognise an IF rod domain in the interval 32–388 (EKEELRELND…KLLEGEEERL (357 aa)). A coil 1A region spans residues 35-69 (ELRELNDRLAVYIDKVRSLETENSALQLQVTEREE). The interval 70–81 (VRGRELTGLKAL) is linker 1. A coil 1B region spans residues 82–215 (YETELADARR…EFRKSMYEEE (134 aa)). K102 participates in a covalent cross-link: Glycyl lysine isopeptide (Lys-Gly) (interchain with G-Cter in SUMO2). K111 is modified (N6-acetyllysine). A Glycyl lysine isopeptide (Lys-Gly) (interchain with G-Cter in SUMO2) cross-link involves residue K123. S126 is modified (phosphoserine). Residue K145 forms a Glycyl lysine isopeptide (Lys-Gly) (interchain with G-Cter in SUMO2) linkage. Position 157 is an N6-acetyllysine; alternate (K157). A Glycyl lysine isopeptide (Lys-Gly) (interchain with G-Cter in SUMO2); alternate cross-link involves residue K157. S158 carries the phosphoserine modification. Residue K181 forms a Glycyl lysine isopeptide (Lys-Gly) (interchain with G-Cter in SUMO2) linkage. A phosphoserine mark is found at S200, S210, and S232. The tract at residues 216 to 243 (INETRRKHETRLVEVDSGRQIEYEYKLA) is linker 2. Residues K241 and K261 each participate in a glycyl lysine isopeptide (Lys-Gly) (interchain with G-Cter in SUMO2) cross-link. The segment at 244–386 (QALHEMREQH…YRKLLEGEEE (143 aa)) is coil 2. K271 carries the post-translational modification N6-acetyllysine; alternate. K271 is covalently cross-linked (Glycyl lysine isopeptide (Lys-Gly) (interchain with G-Cter in SUMO2); alternate). 2 positions are modified to phosphoserine: S278 and S302. Residue K312 forms a Glycyl lysine isopeptide (Lys-Gly) (interchain with G-Cter in SUMO2) linkage. K330 is subject to N6-acetyllysine; alternate. Residue K330 forms a Glycyl lysine isopeptide (Lys-Gly) (interchain with G-Cter in SUMO2); alternate linkage. S375 and S393 each carry phosphoserine. Residues 387–586 (RLKLSPSPSS…RASNRSCAIM (200 aa)) are tail. The segment at 388 to 432 (LKLSPSPSSRVTVSRASSSRSVRTTRGKRKRVDVEESEASSSVSI) is disordered. The segment covering 390–409 (LSPSPSSRVTVSRASSSRSV) has biased composition (low complexity). T399 carries an O-linked (GlcNAc) threonine glycan. R413 is subject to Omega-N-methylarginine. The Nuclear localization signal motif lies at 415 to 420 (KRKRVD). The region spanning 430 to 546 (VSISHSASAT…EEVAQRSTVF (117 aa)) is the LTD domain. K483 is subject to N6-acetyllysine. Residue K532 forms a Glycyl lysine isopeptide (Lys-Gly) (interchain with G-Cter in SUMO2) linkage. Position 534 is a phosphoserine (S534). A Glycyl lysine isopeptide (Lys-Gly) (interchain with G-Cter in SUMO2) cross-link involves residue K547. Position 575 is a phosphothreonine (T575). Cysteine methyl ester is present on C583. A lipid anchor (S-farnesyl cysteine) is attached at C583. A propeptide spans 584–586 (AIM) (removed in mature form).

The protein belongs to the intermediate filament family. In terms of assembly, homodimer. Lamin dimers then assemble into dimeric head-to-tail polymers. Ultimately, two head-to-tail polymers assemble laterally into a protofilament with a uniformly shaped rod of 3.5 nm in diameter. Interacts with SPAG4 and SEPT12. Post-translationally, B-type lamins undergo a series of modifications, such as farnesylation and phosphorylation. Increased phosphorylation of the lamins occurs before envelope disintegration and probably plays a role in regulating lamin associations. In terms of processing, phosphorylation plays a key role in lamin organization, subcellular localization and nuclear envelope disintegration. Phosphorylation by CDK1 at Ser-23 and Ser-393 at the onset of mitosis drives lamin disassembly and nuclear envelope breakdown.

Its subcellular location is the nucleus lamina. In terms of biological role, lamins are intermediate filament proteins that assemble into a filamentous meshwork, and which constitute the major components of the nuclear lamina, a fibrous layer on the nucleoplasmic side of the inner nuclear membrane. Lamins provide a framework for the nuclear envelope, bridging the nuclear envelope and chromatin, thereby playing an important role in nuclear assembly, chromatin organization, nuclear membrane and telomere dynamics. The structural integrity of the lamina is strictly controlled by the cell cycle, as seen by the disintegration and formation of the nuclear envelope in prophase and telophase, respectively. This Homo sapiens (Human) protein is Lamin-B1 (LMNB1).